Consider the following 333-residue polypeptide: DNA-directed RNA polymerase subunit alpha (333 aa).

Residues 1–233 (MVREKIRVST…DLFIPFLHAE (233 aa)) form an alpha N-terminal domain (alpha-NTD) region. The segment at 269–333 (IALKYIFIDQ…DILEMEKNFA (65 aa)) is alpha C-terminal domain (alpha-CTD).

Belongs to the RNA polymerase alpha chain family. As to quaternary structure, in plastids the minimal PEP RNA polymerase catalytic core is composed of four subunits: alpha, beta, beta', and beta''. When a (nuclear-encoded) sigma factor is associated with the core the holoenzyme is formed, which can initiate transcription.

The protein localises to the plastid. It is found in the chloroplast. It catalyses the reaction RNA(n) + a ribonucleoside 5'-triphosphate = RNA(n+1) + diphosphate. In terms of biological role, DNA-dependent RNA polymerase catalyzes the transcription of DNA into RNA using the four ribonucleoside triphosphates as substrates. The polypeptide is DNA-directed RNA polymerase subunit alpha (Cucumis sativus (Cucumber)).